Consider the following 442-residue polypeptide: Histidinol dehydrogenase (442 aa).

NAD(+)-binding residues include Y136, Q197, and N220. Residues S243, Q265, and H268 each contribute to the substrate site. Q265 and H268 together coordinate Zn(2+). Residues E333 and H334 each act as proton acceptor in the active site. Substrate-binding residues include H334, D367, E421, and H426. Zn(2+) is bound at residue D367. A Zn(2+)-binding site is contributed by H426.

Belongs to the histidinol dehydrogenase family. The cofactor is Zn(2+).

The enzyme catalyses L-histidinol + 2 NAD(+) + H2O = L-histidine + 2 NADH + 3 H(+). Its pathway is amino-acid biosynthesis; L-histidine biosynthesis; L-histidine from 5-phospho-alpha-D-ribose 1-diphosphate: step 9/9. In terms of biological role, catalyzes the sequential NAD-dependent oxidations of L-histidinol to L-histidinaldehyde and then to L-histidine. The protein is Histidinol dehydrogenase of Pseudomonas fluorescens (strain ATCC BAA-477 / NRRL B-23932 / Pf-5).